A 436-amino-acid chain; its full sequence is Bifunctional protein GlmU (436 aa).

The tract at residues 1 to 225 (MNNNTSIIIL…EQNFMGINDK (225 aa)) is pyrophosphorylase. Residues 10–13 (LAAG), Lys-24, Gln-76, and 83–84 (GT) each bind UDP-N-acetyl-alpha-D-glucosamine. A Mg(2+)-binding site is contributed by Asp-104. UDP-N-acetyl-alpha-D-glucosamine contacts are provided by Gly-137, Glu-151, Asn-166, and Asn-223. Asn-223 contacts Mg(2+). Residues 226–246 (FQLSIAEKIMQDEIKQNLMKA) are linker. The interval 247 to 436 (GVLMRMPESI…KFFGKDDVKK (190 aa)) is N-acetyltransferase. The UDP-N-acetyl-alpha-D-glucosamine site is built by Arg-310 and Lys-327. Catalysis depends on His-338, which acts as the Proton acceptor. Residues Tyr-341 and Asn-352 each contribute to the UDP-N-acetyl-alpha-D-glucosamine site. Acetyl-CoA-binding positions include 361-362 (NY), Ser-380, Ala-398, and Arg-415.

In the N-terminal section; belongs to the N-acetylglucosamine-1-phosphate uridyltransferase family. The protein in the C-terminal section; belongs to the transferase hexapeptide repeat family. As to quaternary structure, homotrimer. Mg(2+) serves as cofactor.

Its subcellular location is the cytoplasm. It catalyses the reaction alpha-D-glucosamine 1-phosphate + acetyl-CoA = N-acetyl-alpha-D-glucosamine 1-phosphate + CoA + H(+). It carries out the reaction N-acetyl-alpha-D-glucosamine 1-phosphate + UTP + H(+) = UDP-N-acetyl-alpha-D-glucosamine + diphosphate. The protein operates within nucleotide-sugar biosynthesis; UDP-N-acetyl-alpha-D-glucosamine biosynthesis; N-acetyl-alpha-D-glucosamine 1-phosphate from alpha-D-glucosamine 6-phosphate (route II): step 2/2. It functions in the pathway nucleotide-sugar biosynthesis; UDP-N-acetyl-alpha-D-glucosamine biosynthesis; UDP-N-acetyl-alpha-D-glucosamine from N-acetyl-alpha-D-glucosamine 1-phosphate: step 1/1. It participates in bacterial outer membrane biogenesis; LPS lipid A biosynthesis. Functionally, catalyzes the last two sequential reactions in the de novo biosynthetic pathway for UDP-N-acetylglucosamine (UDP-GlcNAc). The C-terminal domain catalyzes the transfer of acetyl group from acetyl coenzyme A to glucosamine-1-phosphate (GlcN-1-P) to produce N-acetylglucosamine-1-phosphate (GlcNAc-1-P), which is converted into UDP-GlcNAc by the transfer of uridine 5-monophosphate (from uridine 5-triphosphate), a reaction catalyzed by the N-terminal domain. This chain is Bifunctional protein GlmU, found in Campylobacter concisus (strain 13826).